Consider the following 471-residue polypeptide: Glutamate--tRNA ligase (471 aa).

The short motif at 9-19 (PSPTGYLHVGG) is the 'HIGH' region element. Residues Cys-98, Cys-100, Cys-125, and Asp-127 each coordinate Zn(2+). The 'KMSKS' region signature appears at 237–241 (KLSKR). Position 240 (Lys-240) interacts with ATP.

Belongs to the class-I aminoacyl-tRNA synthetase family. Glutamate--tRNA ligase type 1 subfamily. In terms of assembly, monomer. Requires Zn(2+) as cofactor.

Its subcellular location is the cytoplasm. It carries out the reaction tRNA(Glu) + L-glutamate + ATP = L-glutamyl-tRNA(Glu) + AMP + diphosphate. Its function is as follows. Catalyzes the attachment of glutamate to tRNA(Glu) in a two-step reaction: glutamate is first activated by ATP to form Glu-AMP and then transferred to the acceptor end of tRNA(Glu). The polypeptide is Glutamate--tRNA ligase (Yersinia pestis).